Here is a 342-residue protein sequence, read N- to C-terminus: Zinc transporter ZIP11 (342 aa).

7 helical membrane-spanning segments follow: residues 12-32 (LLGT…VFIF), 44-64 (LGFA…APAV), 72-92 (GFGA…AAFV), 194-214 (IALL…AVGV), 263-285 (FWYG…FAVV), 290-307 (ILPY…YVVM), and 322-342 (LASW…VGLG).

It belongs to the ZIP transporter (TC 2.A.5) family. In terms of tissue distribution, highly expressed in the testes and portions of the digestive system including the stomach, ileum and cecum. In contrast, expressed at very low levels in liver, duodenum, jejunum, and colon.

Its subcellular location is the cell membrane. The protein localises to the nucleus. It is found in the cytoplasm. The protein resides in the golgi apparatus. The enzyme catalyses Zn(2+)(in) = Zn(2+)(out). It carries out the reaction Cu(2+)(in) = Cu(2+)(out). In terms of biological role, zinc importer that regulates cytosolic zinc concentration either via zinc influx from the extracellular compartment or efflux from intracellular organelles such as Golgi apparatus. May transport copper ions as well. The transport mechanism remains to be elucidated. In Mus musculus (Mouse), this protein is Zinc transporter ZIP11 (Slc39a11).